The sequence spans 349 residues: 4-hydroxy-2-oxovalerate aldolase 1 (349 aa).

The region spanning I9–Q261 is the Pyruvate carboxyltransferase domain. Substrate is bound at residue R17–D18. Position 18 (D18) interacts with Mn(2+). The Proton acceptor role is filled by H21. S171 and H200 together coordinate substrate. Residues H200 and H202 each contribute to the Mn(2+) site. Y291 contributes to the substrate binding site.

The protein belongs to the 4-hydroxy-2-oxovalerate aldolase family.

The enzyme catalyses (S)-4-hydroxy-2-oxopentanoate = acetaldehyde + pyruvate. This chain is 4-hydroxy-2-oxovalerate aldolase 1, found in Methylibium petroleiphilum (strain ATCC BAA-1232 / LMG 22953 / PM1).